A 126-amino-acid polypeptide reads, in one-letter code: Aspartate 1-decarboxylase (126 aa).

S25 serves as the catalytic Schiff-base intermediate with substrate; via pyruvic acid. At S25 the chain carries Pyruvic acid (Ser). T57 lines the substrate pocket. Y58 (proton donor) is an active-site residue. G73–A75 contacts substrate.

This sequence belongs to the PanD family. As to quaternary structure, heterooctamer of four alpha and four beta subunits. Pyruvate is required as a cofactor. In terms of processing, is synthesized initially as an inactive proenzyme, which is activated by self-cleavage at a specific serine bond to produce a beta-subunit with a hydroxyl group at its C-terminus and an alpha-subunit with a pyruvoyl group at its N-terminus.

Its subcellular location is the cytoplasm. It carries out the reaction L-aspartate + H(+) = beta-alanine + CO2. The protein operates within cofactor biosynthesis; (R)-pantothenate biosynthesis; beta-alanine from L-aspartate: step 1/1. Its function is as follows. Catalyzes the pyruvoyl-dependent decarboxylation of aspartate to produce beta-alanine. This chain is Aspartate 1-decarboxylase, found in Xanthomonas campestris pv. campestris (strain ATCC 33913 / DSM 3586 / NCPPB 528 / LMG 568 / P 25).